Here is a 206-residue protein sequence, read N- to C-terminus: Small ribosomal subunit protein uS4 (206 aa).

In terms of domain architecture, S4 RNA-binding spans 96 to 156; sequence GRLDNVVYRM…EKAKKQSRVK (61 aa).

It belongs to the universal ribosomal protein uS4 family. As to quaternary structure, part of the 30S ribosomal subunit. Contacts protein S5. The interaction surface between S4 and S5 is involved in control of translational fidelity.

One of the primary rRNA binding proteins, it binds directly to 16S rRNA where it nucleates assembly of the body of the 30S subunit. In terms of biological role, with S5 and S12 plays an important role in translational accuracy. The sequence is that of Small ribosomal subunit protein uS4 from Salmonella typhi.